Reading from the N-terminus, the 278-residue chain is Tryptophan 2,3-dioxygenase (278 aa).

Substrate is bound by residues 47 to 51 (FIIQH), Tyr110, and Arg114. His236 contributes to the heme binding site. Thr250 is a substrate binding site.

Belongs to the tryptophan 2,3-dioxygenase family. As to quaternary structure, homotetramer. Heme serves as cofactor.

The catalysed reaction is L-tryptophan + O2 = N-formyl-L-kynurenine. The protein operates within amino-acid degradation; L-tryptophan degradation via kynurenine pathway; L-kynurenine from L-tryptophan: step 1/2. Functionally, heme-dependent dioxygenase that catalyzes the oxidative cleavage of the L-tryptophan (L-Trp) pyrrole ring and converts L-tryptophan to N-formyl-L-kynurenine. Catalyzes the oxidative cleavage of the indole moiety. In Ruegeria pomeroyi (strain ATCC 700808 / DSM 15171 / DSS-3) (Silicibacter pomeroyi), this protein is Tryptophan 2,3-dioxygenase.